The primary structure comprises 268 residues: Glutamate racemase (268 aa).

Substrate is bound by residues 10–11 (DS) and 42–43 (YG). Cysteine 73 serves as the catalytic Proton donor/acceptor. Substrate is bound at residue 74 to 75 (NT). The active-site Proton donor/acceptor is the cysteine 184. 185-186 (TH) is a substrate binding site.

The protein belongs to the aspartate/glutamate racemases family.

The catalysed reaction is L-glutamate = D-glutamate. The protein operates within cell wall biogenesis; peptidoglycan biosynthesis. Functionally, provides the (R)-glutamate required for cell wall biosynthesis. This Carnobacterium sp. (strain St2) protein is Glutamate racemase.